Consider the following 186-residue polypeptide: UPF0340 protein SZO_02480 (186 aa).

This sequence belongs to the UPF0340 family.

The sequence is that of UPF0340 protein SZO_02480 from Streptococcus equi subsp. zooepidemicus (strain H70).